The primary structure comprises 717 residues: Polyribonucleotide nucleotidyltransferase (717 aa).

Positions 488 and 494 each coordinate Mg(2+). The KH domain maps to 555-614; the sequence is PRIEVMNIPVDKIREVIGSGGKVIREIVEKTGAKINIDDDGTVKIASASAKEIEAARKWI. Residues 624-692 enclose the S1 motif domain; the sequence is GQVYEGTVVK…ERGKVRLSMK (69 aa).

Belongs to the polyribonucleotide nucleotidyltransferase family. The cofactor is Mg(2+).

Its subcellular location is the cytoplasm. The catalysed reaction is RNA(n+1) + phosphate = RNA(n) + a ribonucleoside 5'-diphosphate. Involved in mRNA degradation. Catalyzes the phosphorolysis of single-stranded polyribonucleotides processively in the 3'- to 5'-direction. This is Polyribonucleotide nucleotidyltransferase from Rhizobium meliloti (strain 1021) (Ensifer meliloti).